The primary structure comprises 308 residues: Carbonic anhydrase 4 (308 aa).

An N-terminal signal peptide occupies residues 1–18 (MQLLFALLALGALRPLAG). The region spanning 21-281 (LHWCYEIQAS…LGDRSVFKSQ (261 aa)) is the Alpha-carbonic anhydrase domain. Disulfide bonds link Cys-24/Cys-34 and Cys-44/Cys-225. The N-linked (GlcNAc...) asparagine glycan is linked to Asn-31. His-86 (proton donor/acceptor) is an active-site residue. Zn(2+)-binding residues include His-113, His-115, and His-138. The N-linked (GlcNAc...) asparagine glycan is linked to Asn-192. Residue 221-222 (TT) coordinates substrate. The GPI-anchor amidated serine moiety is linked to residue Ser-280. Positions 281–308 (QAAGQLLPLPLPTLLVPTLACVMAGLLR) are cleaved as a propeptide — removed in mature form.

It belongs to the alpha-carbonic anhydrase family. Interacts with SLC4A4. Zn(2+) is required as a cofactor.

Its subcellular location is the cell membrane. The catalysed reaction is hydrogencarbonate + H(+) = CO2 + H2O. Its activity is regulated as follows. Inhibited by acetazolamide. Catalyzes the reversible hydration of carbon dioxide into bicarbonate and protons and thus is essential to maintaining intracellular and extracellular pH. May stimulate the sodium/bicarbonate transporter activity of SLC4A4 that acts in pH homeostasis. It is essential for acid overload removal from the retina and retina epithelium, and acid release in the choriocapillaris in the choroid. This is Carbonic anhydrase 4 (CA4) from Oryctolagus cuniculus (Rabbit).